Reading from the N-terminus, the 457-residue chain is Squalene epoxidase erg1 (457 aa).

FAD-binding positions include 15–16, 35–36, Arg43, Arg114, Val130, Asp293, and Met306; these read IT and ER. The next 3 membrane-spanning stretches (helical) occupy residues 347 to 364, 409 to 429, and 433 to 453; these read GYSF…KLFT, FYAV…ALLM, and IIES…YILS.

It belongs to the squalene monooxygenase family. It depends on FAD as a cofactor.

It is found in the microsome membrane. Its subcellular location is the endoplasmic reticulum membrane. It localises to the vacuole membrane. It catalyses the reaction squalene + reduced [NADPH--hemoprotein reductase] + O2 = (S)-2,3-epoxysqualene + oxidized [NADPH--hemoprotein reductase] + H2O + H(+). The protein operates within terpene metabolism; lanosterol biosynthesis; lanosterol from farnesyl diphosphate: step 2/3. It participates in steroid metabolism; ergosterol biosynthesis. Activity is blocked by the allylamine class antifungal terbinafine. Its function is as follows. Squalene epoxidase; part of the third module of ergosterol biosynthesis pathway that includes by the late steps of the pathway. Erg1 catalyzes the epoxidation of squalene into 2,3-epoxysqualene. The third module or late pathway involves the ergosterol synthesis itself through consecutive reactions that mainly occur in the endoplasmic reticulum (ER) membrane. Firstly, the squalene synthase erg9 catalyzes the condensation of 2 farnesyl pyrophosphate moieties to form squalene, which is the precursor of all steroids. Secondly, squalene is converted into lanosterol by the consecutive action of the squalene epoxidase erg1 and the lanosterol synthase erg7. The lanosterol 14-alpha-demethylase erg11/cyp1 catalyzes C14-demethylation of lanosterol to produce 4,4'-dimethyl cholesta-8,14,24-triene-3-beta-ol. In the next steps, a complex process involving various demethylation, reduction and desaturation reactions catalyzed by the C-14 reductase erg24 and the C-4 demethylation complex erg25-erg26-erg27 leads to the production of zymosterol. Erg28 likely functions in the C-4 demethylation complex reaction by tethering erg26 and Erg27 to the endoplasmic reticulum or to facilitate interaction between these proteins. Then, the sterol 24-C-methyltransferase erg6 catalyzes the methyl transfer from S-adenosyl-methionine to the C-24 of zymosterol to form fecosterol. The C-8 sterol isomerase erg2 catalyzes the reaction which results in unsaturation at C-7 in the B ring of sterols and thus converts fecosterol to episterol. The sterol-C5-desaturases erg31 and erg32 then catalyze the introduction of a C-5 double bond in the B ring to produce 5-dehydroepisterol. The C-22 sterol desaturase erg5 further converts 5-dehydroepisterol into ergosta-5,7,22,24(28)-tetraen-3beta-ol by forming the C-22(23) double bond in the sterol side chain. Finally, ergosta-5,7,22,24(28)-tetraen-3beta-ol is substrate of the C-24(28) sterol reductase erg4 to produce ergosterol. In the genus Schizosaccharomyces, a second route exists between lanosterol and fecosterol, via the methylation of lanosterol to eburicol by erg6, followed by C14-demethylation by erg11/cyp1 and C4-demethylation by the demethylation complex erg25-erg26-erg27. The sequence is that of Squalene epoxidase erg1 from Schizosaccharomyces pombe (strain 972 / ATCC 24843) (Fission yeast).